Consider the following 372-residue polypeptide: Putative aminopeptidase SgcX (372 aa).

A divalent metal cation contacts are provided by His-67 and Asp-180. Residue Glu-212 is the Proton acceptor of the active site. The a divalent metal cation site is built by Glu-213, Asp-235, and His-329.

It belongs to the peptidase M42 family. A divalent metal cation is required as a cofactor.

The chain is Putative aminopeptidase SgcX (sgcX) from Salmonella typhi.